An 82-amino-acid chain; its full sequence is ATP synthase subunit c (82 aa).

A run of 2 helical transmembrane segments spans residues 7-27 (FVAL…CIGI) and 53-73 (FLLA…AMMF).

It belongs to the ATPase C chain family. As to quaternary structure, F-type ATPases have 2 components, F(1) - the catalytic core - and F(0) - the membrane proton channel. F(1) has five subunits: alpha(3), beta(3), gamma(1), delta(1), epsilon(1). F(0) has three main subunits: a(1), b(2) and c(10-14). The alpha and beta chains form an alternating ring which encloses part of the gamma chain. F(1) is attached to F(0) by a central stalk formed by the gamma and epsilon chains, while a peripheral stalk is formed by the delta and b chains.

It is found in the cell inner membrane. Functionally, f(1)F(0) ATP synthase produces ATP from ADP in the presence of a proton or sodium gradient. F-type ATPases consist of two structural domains, F(1) containing the extramembraneous catalytic core and F(0) containing the membrane proton channel, linked together by a central stalk and a peripheral stalk. During catalysis, ATP synthesis in the catalytic domain of F(1) is coupled via a rotary mechanism of the central stalk subunits to proton translocation. In terms of biological role, key component of the F(0) channel; it plays a direct role in translocation across the membrane. A homomeric c-ring of between 10-14 subunits forms the central stalk rotor element with the F(1) delta and epsilon subunits. This Aromatoleum aromaticum (strain DSM 19018 / LMG 30748 / EbN1) (Azoarcus sp. (strain EbN1)) protein is ATP synthase subunit c.